The sequence spans 292 residues: Homoserine kinase (292 aa).

81 to 91 (RPKSGLGSSGA) provides a ligand contact to ATP.

Belongs to the GHMP kinase family. Homoserine kinase subfamily.

It localises to the cytoplasm. It catalyses the reaction L-homoserine + ATP = O-phospho-L-homoserine + ADP + H(+). Its pathway is amino-acid biosynthesis; L-threonine biosynthesis; L-threonine from L-aspartate: step 4/5. Catalyzes the ATP-dependent phosphorylation of L-homoserine to L-homoserine phosphate. The protein is Homoserine kinase of Pyrococcus furiosus (strain ATCC 43587 / DSM 3638 / JCM 8422 / Vc1).